We begin with the raw amino-acid sequence, 1091 residues long: Sodium/potassium exporting P-type ATPase 5 (1091 aa).

Residues 1-63 (MSEGTVKENN…LGDDTKIDYK (63 aa)) lie on the Cytoplasmic side of the membrane. Residues 64–84 (AMVLHQVCNAMIMVLVISMAI) form a helical membrane-spanning segment. The Extracellular segment spans residues 85–90 (SFAVRD). Residues 91 to 111 (WITGGVISFVIAVNVLIGLVQ) traverse the membrane as a helical segment. Residues 112-282 (EYKATKTMNS…TNVGTPLHRK (171 aa)) are Cytoplasmic-facing. A helical membrane pass occupies residues 283–303 (LSKLAVLLFWIAVLFAIIVMA). Residues 304–312 (SQKFDVDKR) lie on the Extracellular side of the membrane. A helical transmembrane segment spans residues 313 to 333 (VAIYAICVALSMIPSSLVVVL). The Cytoplasmic segment spans residues 334–815 (TITMSVGAAV…RRMTDNIQKF (482 aa)). Catalysis depends on Asp369, which acts as the 4-aspartylphosphate intermediate. Mg(2+)-binding residues include Asp369 and Thr371. ATP is bound by residues Thr371 and Glu483. Residues 499 to 525 (ALTGEKSTNQSNENDQSSLSQHNEKPG) are disordered. Residues 503–519 (EKSTNQSNENDQSSLSQ) show a composition bias toward polar residues. Lys561, Arg606, Thr673, Gly674, Asp675, Arg732, and Lys738 together coordinate ATP. Residue Asp757 coordinates Mg(2+). Asn760 contributes to the ATP binding site. A helical transmembrane segment spans residues 816 to 836 (VLQLLAENVAQALYLIIGLVF). Residues 837 to 848 (RDENGKSVFPLS) are Extracellular-facing. Residues 849–869 (PVEVLWIIVVTSCFPAMGLGL) traverse the membrane as a helical segment. Topologically, residues 870–885 (EKAAPDLMDRPPNDSE) are cytoplasmic. Residues 886–906 (VGIFTWEVIIDTFAYGIIMTG) form a helical membrane-spanning segment. The Extracellular portion of the chain corresponds to 907 to 943 (SCMASFTGSLYGINSGRLGHDCDGTYNSSCRDVYRSR). Residues 944 to 964 (SAAFATMTWCALILAWEVVDM) form a helical membrane-spanning segment. Topologically, residues 965–991 (RRSFFRMHPDTDSPVKEFFRSIWGNQF) are cytoplasmic. A helical transmembrane segment spans residues 992–1012 (LFWSIIFGFVSAFPVVYIPVI). Residues 1013 to 1021 (NDKVFLHKP) lie on the Extracellular side of the membrane. The helical transmembrane segment at 1022–1042 (IGAEWGLAIAFTIAFWIGAEL) threads the bilayer. Residues 1043–1091 (YKCGKRRYFKTQRAHNSENDLERSSKHDPFEAYSTSTTLQSEINISVKH) are Cytoplasmic-facing.

This sequence belongs to the cation transport ATPase (P-type) (TC 3.A.3) family. Type IID subfamily. It depends on Mg(2+) as a cofactor. In terms of processing, the active site is phosphorylated in presence of sodium or potassium and in conditions of higher pH. Not phosphorylated in presence of calcium ions.

It is found in the cell membrane. The catalysed reaction is Na(+)(in) + ATP + H2O = Na(+)(out) + ADP + phosphate + H(+). It catalyses the reaction K(+)(in) + ATP + H2O = K(+)(out) + ADP + phosphate + H(+). Catalyzes the hydrolysis of ATP coupled with the export of sodium and potassium from the cell. May export potassium less efficiently. May transport other cations such as lithium. Sodium/potassium efflux ATPases are involved in salt tolerance and maintaining the membrane potential across the plasma membrane in high salinity (Na+) or alkaline (K+) environments. In Saccharomyces cerevisiae (strain ATCC 204508 / S288c) (Baker's yeast), this protein is Sodium/potassium exporting P-type ATPase 5.